The primary structure comprises 325 residues: D-alanine--D-alanine ligase (325 aa).

One can recognise an ATP-grasp domain in the interval 107–311 (KRLLLSESLP…YEALCVEVLK (205 aa)). 137–192 (VDTLGLPLIVKPAREGSSLGLSKVTERAAMAAAVALAEKMDADILCEQFISGDEVT) is an ATP binding site. The Mg(2+) site is built by Asp-264, Glu-278, and Asn-280.

Belongs to the D-alanine--D-alanine ligase family. The cofactor is Mg(2+). Requires Mn(2+) as cofactor.

It localises to the cytoplasm. It carries out the reaction 2 D-alanine + ATP = D-alanyl-D-alanine + ADP + phosphate + H(+). The protein operates within cell wall biogenesis; peptidoglycan biosynthesis. Its function is as follows. Cell wall formation. The sequence is that of D-alanine--D-alanine ligase from Polaromonas naphthalenivorans (strain CJ2).